A 371-amino-acid polypeptide reads, in one-letter code: MEVPTLSKTRKPPDLNEESLDLGIMIALFEIGSIPPVSCSSLPSLKSSDHEATEQRIAKKFESLLKEIKDIVKHVTSYEQKVTETKEPFKETNMFEVSELREKIIELDEINKELVKKLLASLDLGKKENAKKQEMRLDNQNSEDTVQDCSGDLVNCSKGQKALPETQLSKEKAKHGFPHIQEENIRLRNNMERLLQEAEHWSVEHTELSKLIKSYQKSQNDIKTLKNNGTHSPTQTNNESAKQELEEQVKRLKEDTYSLHLIATLLENECQILEQRVELLDELHHQKEEPLQGEPMQINHEQSDKEQKLPEAEKVKIHEKNMPEVEGTFHKRDQFFTSLDICHNKKAHNNQFNTRIAKRALVVKRPASSLS.

Coiled coils occupy residues 96–148 (EVSE…TVQD) and 177–289 (FPHI…QKEE). Ser98 carries the post-translational modification Phosphoserine. A helix-loop-helix motif region spans residues 110–120 (INKELVKKLLA). A basic motif region spans residues 121–188 (SLDLGKKENA…HIQEENIRLR (68 aa)). Position 202 is a phosphoserine (Ser202). Residues 223–240 (KTLKNNGTHSPTQTNNES) are compositionally biased toward polar residues. Residues 223 to 246 (KTLKNNGTHSPTQTNNESAKQELE) are disordered. The segment at 245-266 (LEEQVKRLKEDTYSLHLIATLL) is leucine-zipper.

Phosphorylated by MAPK1/ERK2 and MAPK3/ERK1.

It is found in the cytoplasm. The protein resides in the nucleus. Transcription factor that binds to the DNA sequence 5'-CANNTG-3'(E box) and the G-box motif. May play an important role in the regulation of cell proliferation and differentiation during spermatogenesis. The protein is Spermatogenic leucine zipper protein 1 (SPZ1) of Bos taurus (Bovine).